Reading from the N-terminus, the 261-residue chain is General secretion pathway protein N (261 aa).

The Cytoplasmic portion of the chain corresponds to 1–10 (MRLEMIGLRT). Residues 11–31 (WLLATVVGWALLVCVLAVAGL) form a helical membrane-spanning segment. Over 32–261 (GKRVELLPDD…QGGSTPGQTQ (230 aa)) the chain is Periplasmic. The disordered stretch occupies residues 158-261 (VFNGQGGQPP…QGGSTPGQTQ (104 aa)). The segment covering 179 to 200 (AVPPLPPNVPPAPATPAPPPAE) has biased composition (pro residues). Positions 201–211 (VPQQQPGGQAP) are enriched in low complexity. Basic and acidic residues predominate over residues 227–244 (RPSDEQMRAIRERIEARR).

As to quaternary structure, binds to XpsD.

The protein localises to the cell inner membrane. In terms of biological role, involved in a general secretion pathway (GSP) for the export of proteins. The chain is General secretion pathway protein N (xpsN) from Xanthomonas campestris pv. campestris (strain ATCC 33913 / DSM 3586 / NCPPB 528 / LMG 568 / P 25).